The primary structure comprises 131 residues: Small ribosomal subunit protein uS11 (131 aa).

It belongs to the universal ribosomal protein uS11 family. As to quaternary structure, part of the 30S ribosomal subunit. Interacts with proteins S7 and S18. Binds to IF-3.

Functionally, located on the platform of the 30S subunit, it bridges several disparate RNA helices of the 16S rRNA. Forms part of the Shine-Dalgarno cleft in the 70S ribosome. The sequence is that of Small ribosomal subunit protein uS11 from Helicobacter pylori (strain P12).